Here is a 464-residue protein sequence, read N- to C-terminus: Bifunctional protein GlmU (464 aa).

A pyrophosphorylase region spans residues 1 to 236; sequence MRAVILAAGL…PTEALGVNTR (236 aa). Residues 6 to 9, Lys20, and 77 to 78 contribute to the UDP-N-acetyl-alpha-D-glucosamine site; these read LAAG and GT. Asp102 provides a ligand contact to Mg(2+). UDP-N-acetyl-alpha-D-glucosamine-binding residues include Gly145, Glu161, Asn176, and Asn234. Position 234 (Asn234) interacts with Mg(2+). The interval 237-257 is linker; the sequence is WDLALVENVIKLKIARYWAER. Residues 258-464 form an N-acetyltransferase region; it reads GVTVHYPETV…GRGKKKLQKD (207 aa). UDP-N-acetyl-alpha-D-glucosamine-binding residues include Arg340 and Lys358. The Proton acceptor role is filled by His370. UDP-N-acetyl-alpha-D-glucosamine-binding residues include Tyr373 and Asn384. Acetyl-CoA is bound by residues Ala387, 393–394, Ser412, Gly430, and Arg447; that span reads NY.

It in the N-terminal section; belongs to the N-acetylglucosamine-1-phosphate uridyltransferase family. The protein in the C-terminal section; belongs to the transferase hexapeptide repeat family. As to quaternary structure, homotrimer. Requires Mg(2+) as cofactor.

The protein resides in the cytoplasm. It catalyses the reaction alpha-D-glucosamine 1-phosphate + acetyl-CoA = N-acetyl-alpha-D-glucosamine 1-phosphate + CoA + H(+). The enzyme catalyses N-acetyl-alpha-D-glucosamine 1-phosphate + UTP + H(+) = UDP-N-acetyl-alpha-D-glucosamine + diphosphate. It functions in the pathway nucleotide-sugar biosynthesis; UDP-N-acetyl-alpha-D-glucosamine biosynthesis; N-acetyl-alpha-D-glucosamine 1-phosphate from alpha-D-glucosamine 6-phosphate (route II): step 2/2. It participates in nucleotide-sugar biosynthesis; UDP-N-acetyl-alpha-D-glucosamine biosynthesis; UDP-N-acetyl-alpha-D-glucosamine from N-acetyl-alpha-D-glucosamine 1-phosphate: step 1/1. The protein operates within bacterial outer membrane biogenesis; LPS lipid A biosynthesis. In terms of biological role, catalyzes the last two sequential reactions in the de novo biosynthetic pathway for UDP-N-acetylglucosamine (UDP-GlcNAc). The C-terminal domain catalyzes the transfer of acetyl group from acetyl coenzyme A to glucosamine-1-phosphate (GlcN-1-P) to produce N-acetylglucosamine-1-phosphate (GlcNAc-1-P), which is converted into UDP-GlcNAc by the transfer of uridine 5-monophosphate (from uridine 5-triphosphate), a reaction catalyzed by the N-terminal domain. The chain is Bifunctional protein GlmU from Aquifex aeolicus (strain VF5).